Consider the following 367-residue polypeptide: Peptide chain release factor 1 (367 aa).

Residue Gln-238 is modified to N5-methylglutamine.

Belongs to the prokaryotic/mitochondrial release factor family. Methylated by PrmC. Methylation increases the termination efficiency of RF1.

It is found in the cytoplasm. In terms of biological role, peptide chain release factor 1 directs the termination of translation in response to the peptide chain termination codons UAG and UAA. This is Peptide chain release factor 1 from Dictyoglomus thermophilum (strain ATCC 35947 / DSM 3960 / H-6-12).